The sequence spans 90 residues: Probable Fe(2+)-trafficking protein (90 aa).

The protein belongs to the Fe(2+)-trafficking protein family.

In terms of biological role, could be a mediator in iron transactions between iron acquisition and iron-requiring processes, such as synthesis and/or repair of Fe-S clusters in biosynthetic enzymes. This chain is Probable Fe(2+)-trafficking protein, found in Pseudomonas fluorescens (strain SBW25).